A 187-amino-acid polypeptide reads, in one-letter code: Elongation factor P (187 aa).

The protein belongs to the elongation factor P family.

Its subcellular location is the cytoplasm. It participates in protein biosynthesis; polypeptide chain elongation. Involved in peptide bond synthesis. Stimulates efficient translation and peptide-bond synthesis on native or reconstituted 70S ribosomes in vitro. Probably functions indirectly by altering the affinity of the ribosome for aminoacyl-tRNA, thus increasing their reactivity as acceptors for peptidyl transferase. The protein is Elongation factor P of Helicobacter pylori (strain P12).